The sequence spans 131 residues: Small ribosomal subunit protein eS17A (131 aa).

It belongs to the eukaryotic ribosomal protein eS17 family. Component of the small ribosomal subunit (SSU). Mature yeast ribosomes consist of a small (40S) and a large (60S) subunit. The 40S small subunit contains 1 molecule of ribosomal RNA (18S rRNA) and at least 33 different proteins. The large 60S subunit contains 3 rRNA molecules (25S, 5.8S and 5S rRNA) and at least 46 different proteins.

The protein localises to the cytoplasm. Its function is as follows. Component of the ribosome, a large ribonucleoprotein complex responsible for the synthesis of proteins in the cell. The small ribosomal subunit (SSU) binds messenger RNAs (mRNAs) and translates the encoded message by selecting cognate aminoacyl-transfer RNA (tRNA) molecules. The large subunit (LSU) contains the ribosomal catalytic site termed the peptidyl transferase center (PTC), which catalyzes the formation of peptide bonds, thereby polymerizing the amino acids delivered by tRNAs into a polypeptide chain. The nascent polypeptides leave the ribosome through a tunnel in the LSU and interact with protein factors that function in enzymatic processing, targeting, and the membrane insertion of nascent chains at the exit of the ribosomal tunnel. This Schizosaccharomyces pombe (strain 972 / ATCC 24843) (Fission yeast) protein is Small ribosomal subunit protein eS17A (rps1701).